We begin with the raw amino-acid sequence, 282 residues long: Pantothenate synthetase (282 aa).

An ATP-binding site is contributed by 26–33; it reads MGNLHEGH. The Proton donor role is filled by histidine 33. Glutamine 57 contacts (R)-pantoate. Residue glutamine 57 participates in beta-alanine binding. An ATP-binding site is contributed by 144–147; it reads GKKD. Glutamine 150 serves as a coordination point for (R)-pantoate. Residues isoleucine 173 and 181 to 184 each bind ATP; that span reads LSSR.

It belongs to the pantothenate synthetase family. In terms of assembly, homodimer.

The protein localises to the cytoplasm. The catalysed reaction is (R)-pantoate + beta-alanine + ATP = (R)-pantothenate + AMP + diphosphate + H(+). It functions in the pathway cofactor biosynthesis; (R)-pantothenate biosynthesis; (R)-pantothenate from (R)-pantoate and beta-alanine: step 1/1. Its function is as follows. Catalyzes the condensation of pantoate with beta-alanine in an ATP-dependent reaction via a pantoyl-adenylate intermediate. The sequence is that of Pantothenate synthetase from Cupriavidus necator (strain ATCC 17699 / DSM 428 / KCTC 22496 / NCIMB 10442 / H16 / Stanier 337) (Ralstonia eutropha).